A 367-amino-acid polypeptide reads, in one-letter code: CCN family member 4 (367 aa).

Positions 1 to 22 (MRWLLPWTLAAVAVLMVGNILA) are cleaved as a signal peptide. The IGFBP N-terminal domain maps to 45–118 (RPEFCKWPCE…RYAIGVCAQV (74 aa)). 4 disulfides stabilise this stretch: cysteine 49–cysteine 73, cysteine 53–cysteine 75, cysteine 55–cysteine 76, and cysteine 62–cysteine 79. Residue asparagine 86 is glycosylated (N-linked (GlcNAc...) asparagine). Disulfide bonds link cysteine 87–cysteine 101 and cysteine 93–cysteine 115. Positions 121 to 186 (VGCVLDGVRY…GQCCEQWVCD (66 aa)) constitute a VWFC domain. An N-linked (GlcNAc...) asparagine glycan is attached at asparagine 143. In terms of domain architecture, TSP type-1 spans 215–260 (NCIAYTSPWSPCSTTCGLGISTRISNVNARCWPEQESRLCNLRPCD). Intrachain disulfides connect cysteine 273-cysteine 310, cysteine 290-cysteine 324, cysteine 301-cysteine 340, cysteine 304-cysteine 342, and cysteine 309-cysteine 346. Residues 273–347 (CLAVYQPEEA…NACFCNLSCR (75 aa)) form the CTCK domain. A glycan (N-linked (GlcNAc...) asparagine) is linked at asparagine 284. A glycan (N-linked (GlcNAc...) asparagine) is linked at asparagine 343.

Belongs to the CCN family.

It localises to the secreted. In terms of biological role, downstream regulator in the Wnt/Frizzled-signaling pathway. Associated with cell survival. Adheres to skin and melanoma fibroblasts. In vitro binding to skin fibroblasts occurs through the proteoglycans, decorin and biglycan. This Rattus norvegicus (Rat) protein is CCN family member 4 (Ccn4).